Here is a 537-residue protein sequence, read N- to C-terminus: Exodeoxyribonuclease 7 large subunit (537 aa).

The interval 508 to 537 (GEGAPVEPPQAARPSKGARTKAAQPSLFDD) is disordered.

This sequence belongs to the XseA family. As to quaternary structure, heterooligomer composed of large and small subunits.

It localises to the cytoplasm. It carries out the reaction Exonucleolytic cleavage in either 5'- to 3'- or 3'- to 5'-direction to yield nucleoside 5'-phosphates.. Its function is as follows. Bidirectionally degrades single-stranded DNA into large acid-insoluble oligonucleotides, which are then degraded further into small acid-soluble oligonucleotides. The chain is Exodeoxyribonuclease 7 large subunit from Azorhizobium caulinodans (strain ATCC 43989 / DSM 5975 / JCM 20966 / LMG 6465 / NBRC 14845 / NCIMB 13405 / ORS 571).